The chain runs to 493 residues: E3 ubiquitin-protein ligase Hakai (493 aa).

Disordered regions lie at residues 1-20 (MDHN…LGGL) and 28-61 (IKLI…GDEE). The segment covering 7-16 (DLQGTNSSAS) has biased composition (polar residues). The RING-type zinc-finger motif lies at 109 to 149 (CDKCGLPIKMYGRMIPCKHVFCYDCAILHEKKGDKMCPGCN). Residues 148 to 206 (CNEPVQRIEQCVRGSLFMCSIVQGCKRTYLSQRDLQAHINHRHMRAGKPVTRPPLEPVH) are HYB domain. The segment at 164–190 (FMCSIVQGCKRTYLSQRDLQAHINHRH) adopts a C2H2-type zinc-finger fold. Residues 253-493 (YNQPHEDIRP…DQARYRPYYQ (241 aa)) are disordered. Pro residues-rich tracts occupy residues 262-276 (PPPA…PPRP), 342-352 (APPPPPPPPIS), 372-389 (APPP…PPPG), and 399-412 (MNHP…PQHG). Residues 427–444 (NPNSLPQFSEDQGTLSPP) are compositionally biased toward polar residues. Positions 459–469 (PRGPPPPPRMQ) are enriched in pro residues. Positions 470–480 (GPPAQAPLAGP) are enriched in low complexity.

This sequence belongs to the Hakai family. As to quaternary structure, homodimer. Interacts with tyrosine-phosphorylated SRC substrates. Component of the WMM complex, a N6-methyltransferase complex composed of a catalytic subcomplex, named MAC, and of an associated subcomplex, named MACOM. Component of the MACOM subcomplex.

It localises to the nucleus speckle. Its subcellular location is the nucleus. The protein resides in the nucleoplasm. The enzyme catalyses S-ubiquitinyl-[E2 ubiquitin-conjugating enzyme]-L-cysteine + [acceptor protein]-L-lysine = [E2 ubiquitin-conjugating enzyme]-L-cysteine + N(6)-ubiquitinyl-[acceptor protein]-L-lysine.. It participates in protein modification; protein ubiquitination. Functionally, E3 ubiquitin-protein ligase that mediates ubiquitination of several tyrosine-phosphorylated Src substrates. Associated component of the WMM complex, a complex that mediates N6-methyladenosine (m6A) methylation of RNAs, a modification that plays a role in the efficiency of mRNA splicing and RNA processing. This is E3 ubiquitin-protein ligase Hakai from Gallus gallus (Chicken).